Consider the following 307-residue polypeptide: UDP-N-acetylenolpyruvoylglucosamine reductase (307 aa).

Positions 33-198 (KVGGPVDILV…LEAILKLSLG (166 aa)) constitute an FAD-binding PCMH-type domain. The active site involves Arg177. Ser227 (proton donor) is an active-site residue. The active site involves Glu297.

This sequence belongs to the MurB family. The cofactor is FAD.

It is found in the cytoplasm. It catalyses the reaction UDP-N-acetyl-alpha-D-muramate + NADP(+) = UDP-N-acetyl-3-O-(1-carboxyvinyl)-alpha-D-glucosamine + NADPH + H(+). It functions in the pathway cell wall biogenesis; peptidoglycan biosynthesis. Cell wall formation. The sequence is that of UDP-N-acetylenolpyruvoylglucosamine reductase from Clostridium tetani (strain Massachusetts / E88).